A 394-amino-acid polypeptide reads, in one-letter code: C-19 steroid 1alpha-hydroxylase (394 aa).

Residues H81, R85, R281, G335, H338, and C340 each contribute to the heme b site.

It belongs to the cytochrome P450 family. Heme b is required as a cofactor.

It catalyses the reaction testosterone + 2 reduced [2Fe-2S]-[ferredoxin] + O2 + 2 H(+) = 1alpha-hydroxytestosterone + 2 oxidized [2Fe-2S]-[ferredoxin] + H2O. The catalysed reaction is androst-4-ene-3,17-dione + 2 reduced [2Fe-2S]-[ferredoxin] + O2 + 2 H(+) = 1alpha-hydroxyandrost-4-ene-3,17-dione + 2 oxidized [2Fe-2S]-[ferredoxin] + H2O. Functionally, hydroxylase that can catalyze the in vitro conversion of the sesquiterpenoid nootkatone, a natural organic compound produced by some plants, to at least five hydrophilic products. The native ferredoxin reductase FdR_B and either Fdx2 or Fdx8 ferredoxins can act as the redox partners for the conversion of nootkatone. Its function is as follows. In addition, acts as a steroid 1alpha-hydroxylase, when associated in vitro with the surrogate redox partners bovine adrenodoxin (Adx) and adrenodoxin reductase (Adr). Acts on several C-19 steroid substrates, including testosterone and androstenedione, which are hydroxylated to 1alpha-hydroxytestosterone and 1alpha-hydroxyandrostenedione, respectively. Can use their derivatives testosterone-acetate and 11-oxoandrostenedione, but not vitamin D3 and 25-hydroxyvitamin D3. Also catalyzes the hydroxylation of the C-21 steroid 11-deoxycorticosterone to 1alpha-hydroxy-11-deoxycorticosterone. Catalyzes the hydroxylation of the C-21 steroid progesterone, leading to the formation of seven products: two major (1alpha-hydroxyprogesterone and 17alpha-hydroxyprogesterone) and five minor products. The sequence is that of C-19 steroid 1alpha-hydroxylase from Sorangium cellulosum (strain So ce56) (Polyangium cellulosum (strain So ce56)).